Here is a 433-residue protein sequence, read N- to C-terminus: ACT domain-containing protein ACR6 (433 aa).

ACT domains follow at residues 30-110 (VIQV…RSSV), 120-207 (SIEL…SCSD), 250-326 (VVTM…ASEG), and 328-402 (ELEL…VKKK).

In terms of biological role, may bind amino acids. In Arabidopsis thaliana (Mouse-ear cress), this protein is ACT domain-containing protein ACR6.